A 506-amino-acid chain; its full sequence is Histidine ammonia-lyase (506 aa).

The segment at residues 143-145 (ASG) is a cross-link (5-imidazolinone (Ala-Gly)). Ser-144 is subject to 2,3-didehydroalanine (Ser).

It belongs to the PAL/histidase family. Contains an active site 4-methylidene-imidazol-5-one (MIO), which is formed autocatalytically by cyclization and dehydration of residues Ala-Ser-Gly.

It is found in the cytoplasm. The enzyme catalyses L-histidine = trans-urocanate + NH4(+). Its pathway is amino-acid degradation; L-histidine degradation into L-glutamate; N-formimidoyl-L-glutamate from L-histidine: step 1/3. The sequence is that of Histidine ammonia-lyase from Salmonella dublin (strain CT_02021853).